We begin with the raw amino-acid sequence, 249 residues long: DNA polymerase sliding clamp (249 aa).

This sequence belongs to the PCNA family. As to quaternary structure, homotrimer which circularizes head-to-tail (head is a N-terminus, tail is at C-terminus) to form a toroid. RFC opens the toroid so it can load on DNA. Interacts with both Pol I (pol) and Pol II (polB-polC), with Hel308 (hjm) and with Hjc. Interaction with the C-terminal PIP-box of RfcL may stabilize the toroidal structure.

Sliding clamp subunit that acts as a moving platform for DNA processing. Responsible for tethering the catalytic subunit of DNA polymerase to DNA during high-speed replication. Unlike its eukaryotic paralog, loads on circular DNA without the replication factor C (RFC) clamp loader, although RFC greatly increases loading efficiency. Stimulates the ATPase activity of replication factor C (RFC) in the presence of ssDNA. Stimulates the helicase activity of Hel308 and may alter its substrate specificity. The polypeptide is DNA polymerase sliding clamp (Pyrococcus furiosus (strain ATCC 43587 / DSM 3638 / JCM 8422 / Vc1)).